Here is a 61-residue protein sequence, read N- to C-terminus: Protein translocase subunit SecE (61 aa).

The helical transmembrane segment at 39–59 threads the bilayer; that stretch reads VGIIIIGLIGFILSIVSQVLF.

The protein belongs to the SecE/SEC61-gamma family. In terms of assembly, component of the Sec protein translocase complex. Heterotrimer consisting of SecY (alpha), SecG (beta) and SecE (gamma) subunits. The heterotrimers can form oligomers, although 1 heterotrimer is thought to be able to translocate proteins. Interacts with the ribosome. May interact with SecDF, and other proteins may be involved.

The protein localises to the cell membrane. In terms of biological role, essential subunit of the Sec protein translocation channel SecYEG. Clamps together the 2 halves of SecY. May contact the channel plug during translocation. This is Protein translocase subunit SecE from Methanosphaera stadtmanae (strain ATCC 43021 / DSM 3091 / JCM 11832 / MCB-3).